Reading from the N-terminus, the 264-residue chain is ATP synthase subunit a (264 aa).

6 consecutive transmembrane segments (helical) span residues 29–49 (TWHI…LWLF), 90–110 (IAPL…MDMI), 134–154 (DLNI…YYSI), 177–197 (IPVN…SLAL), 208–228 (LIFI…ALGV), and 235–255 (LIFH…LTIV).

It belongs to the ATPase A chain family. In terms of assembly, F-type ATPases have 2 components, CF(1) - the catalytic core - and CF(0) - the membrane proton channel. CF(1) has five subunits: alpha(3), beta(3), gamma(1), delta(1), epsilon(1). CF(0) has three main subunits: a(1), b(2) and c(9-12). The alpha and beta chains form an alternating ring which encloses part of the gamma chain. CF(1) is attached to CF(0) by a central stalk formed by the gamma and epsilon chains, while a peripheral stalk is formed by the delta and b chains.

It is found in the cell inner membrane. Its function is as follows. Key component of the proton channel; it plays a direct role in the translocation of protons across the membrane. The polypeptide is ATP synthase subunit a (Shewanella loihica (strain ATCC BAA-1088 / PV-4)).